We begin with the raw amino-acid sequence, 615 residues long: ABC transporter G family member 22 (615 aa).

Residues 31–279 form the ABC transporter domain; it reads ITFKDLAYSV…EIGFPFPDQT (249 aa). An ATP-binding site is contributed by 67 to 74; it reads GPSGSGKT. Residues 364 to 610 enclose the ABC transmembrane type-2 domain; the sequence is SNCLVRFAVA…TMVFLCLHYF (247 aa). A run of 6 helical transmembrane segments spans residues 370 to 390, 400 to 420, 442 to 462, 477 to 497, 508 to 528, and 587 to 607; these read FAVAVFVGLLFGACFSGLGMD, VLFYLVINMILQPFASISLFI, LALMFFEILACIGTAFILGTI, FFAMAILTLAHLAGDFFMLII, FAVGAGVATIYQLFAGFFVPI, and INLIIVSSFAFAFFTMVFLCL.

Belongs to the ABC transporter superfamily. ABCG family. Eye pigment precursor importer (TC 3.A.1.204) subfamily.

The protein localises to the membrane. In terms of biological role, may be involved in cell migration. This is ABC transporter G family member 22 (abcG22) from Dictyostelium discoideum (Social amoeba).